A 333-amino-acid polypeptide reads, in one-letter code: 1,5-anhydro-D-fructose reductase (333 aa).

NADP(+)-binding positions include 9 to 12 (ASTI), 33 to 34 (ST), arginine 38, 71 to 76 (TTNELH), 93 to 94 (EK), asparagine 120, 162 to 163 (WR), and tyrosine 283.

In terms of assembly, monomer.

It catalyses the reaction 1,5-anhydro-D-mannitol + NADP(+) = 1,5-anhydro-D-fructose + NADPH + H(+). Functionally, catalyzes the NADPH-specific reduction of 1,5-anhydro-D-fructose to 1,5-anhydro-D-mannitol. Also shows some activity against structurally related compounds such as 3-keto-1,5-anhydro-D-fructose, D-glucosone and D-xylosone. The enzyme cannot use NADH as cosubstrate. The polypeptide is 1,5-anhydro-D-fructose reductase (afr) (Ensifer adhaerens (Sinorhizobium morelense)).